The following is a 587-amino-acid chain: Glutamine--tRNA ligase (587 aa).

Residues 58-68 (PEPNGYLHIGH) carry the 'HIGH' region motif. Residues 59–61 (EPN) and 65–71 (HIGHAKS) contribute to the ATP site. Positions 91 and 240 each coordinate L-glutamine. ATP-binding positions include T259 and 294 to 295 (RL). Residues 301-305 (VTSKR) carry the 'KMSKS' region motif.

Belongs to the class-I aminoacyl-tRNA synthetase family. As to quaternary structure, monomer.

The protein localises to the cytoplasm. The enzyme catalyses tRNA(Gln) + L-glutamine + ATP = L-glutaminyl-tRNA(Gln) + AMP + diphosphate. The chain is Glutamine--tRNA ligase from Bordetella pertussis (strain Tohama I / ATCC BAA-589 / NCTC 13251).